A 319-amino-acid polypeptide reads, in one-letter code: MEEDQEEPPSSSTSSESPEVVLKAPKAPTRRRKNSKKDRRQDMEVDDGEKESTAQYCKGFYDALRVMQTTNKYEFTGGAVSSPVLPVLQTAAFSPITPASASDMHTIVMSLLGNTPITSGPSIAPLSSPTLLPLVTSGDLDDLSMKILASSAIPGPPIISSSNSPDSSTTAVTTSQITAFQPLLNNFVSSTTASTSRPDKLNLTPPQQSAEIYAFNGVNSDDSDGGLDSRSASRCGMALDDQEKKKLERKRARNRQAATKCRQKKMDRIKELEEQVLHEKHRGQRLDAELLELNRALEHFRRTVEHHSGNGCPNNSIRV.

Disordered regions lie at residues 1–52 (MEED…EKES) and 216–264 (NGVN…CRQK). Positions 8-19 (PPSSSTSSESPE) are enriched in low complexity. Basic residues predominate over residues 28–38 (PTRRRKNSKKD). The tract at residues 244 to 285 (KKKLERKRARNRQAATKCRQKKMDRIKELEEQVLHEKHRGQR) is basic motif. One can recognise a bZIP domain in the interval 244–307 (KKKLERKRAR…EHFRRTVEHH (64 aa)). The interval 286-293 (LDAELLEL) is leucine-zipper.

Belongs to the bZIP family. Jun subfamily. In terms of assembly, heterodimer; with fos-1. Isoform a, isoform b, isoform c and isoform d are expressed in the spermatheca.

Its subcellular location is the nucleus. Transcription factor that recognizes and binds to the AP-1 non-canonical enhancer heptamer motif 5'-TTAGTCA-3'. Required for ovulation. Controls plc-1 expression in the spermatheca to regulate spermathecal valve dilation. This Caenorhabditis elegans protein is Transcription factor jun-1.